A 330-amino-acid chain; its full sequence is Ketol-acid reductoisomerase (NADP(+)) (330 aa).

The KARI N-terminal Rossmann domain maps to 2–182 (ARMYYDEDAN…GGTRAGVLET (181 aa)). NADP(+)-binding positions include 25-28 (YGSQ), serine 51, serine 53, and 83-86 (DEVQ). The active site involves histidine 108. Glycine 134 lines the NADP(+) pocket. One can recognise a KARI C-terminal knotted domain in the interval 183 to 328 (TFREETETDL…QDLRAMMSWL (146 aa)). The Mg(2+) site is built by aspartate 191, glutamate 195, glutamate 227, and glutamate 231. Position 252 (serine 252) interacts with substrate.

It belongs to the ketol-acid reductoisomerase family. The cofactor is Mg(2+).

It catalyses the reaction (2R)-2,3-dihydroxy-3-methylbutanoate + NADP(+) = (2S)-2-acetolactate + NADPH + H(+). The catalysed reaction is (2R,3R)-2,3-dihydroxy-3-methylpentanoate + NADP(+) = (S)-2-ethyl-2-hydroxy-3-oxobutanoate + NADPH + H(+). Its pathway is amino-acid biosynthesis; L-isoleucine biosynthesis; L-isoleucine from 2-oxobutanoate: step 2/4. It participates in amino-acid biosynthesis; L-valine biosynthesis; L-valine from pyruvate: step 2/4. Functionally, involved in the biosynthesis of branched-chain amino acids (BCAA). Catalyzes an alkyl-migration followed by a ketol-acid reduction of (S)-2-acetolactate (S2AL) to yield (R)-2,3-dihydroxy-isovalerate. In the isomerase reaction, S2AL is rearranged via a Mg-dependent methyl migration to produce 3-hydroxy-3-methyl-2-ketobutyrate (HMKB). In the reductase reaction, this 2-ketoacid undergoes a metal-dependent reduction by NADPH to yield (R)-2,3-dihydroxy-isovalerate. The polypeptide is Ketol-acid reductoisomerase (NADP(+)) (Microcystis aeruginosa (strain NIES-843 / IAM M-2473)).